Consider the following 339-residue polypeptide: Transmembrane protein 120B (339 aa).

The stretch at 1-77 forms a coiled coil; sequence MSGQLERCER…ASREEAELVQ (77 aa). Transmembrane regions (helical) follow at residues 102–124, 132–152, 159–179, 187–207, 270–290, and 302–322; these read GLYLNLVLGNVNVTLLSNQAKFA, FKLYLTIILLLGAVACRFFLH, VFNFLLVWYYCTLTIRESILI, GWWVSHHYVSTFLSGVMLTWP, FLLPFLFCGHFWQLYNAVTLF, and QVFVLALTFLVLFLGNFLTTL.

This sequence belongs to the TMEM120 family. In terms of assembly, heterooligomer with TMEM120A.

The protein resides in the nucleus inner membrane. In terms of biological role, necessary for efficient adipogenesis. Does not show ion channel activity. The protein is Transmembrane protein 120B (TMEM120B) of Bos taurus (Bovine).